We begin with the raw amino-acid sequence, 625 residues long: Alpha-protein kinase vwkA (625 aa).

Residues 1–15 are compositionally biased toward basic and acidic residues; the sequence is MESKYVLSTEKESKT. The interval 1–64 is disordered; that stretch reads MESKYVLSTE…GLSSGGSKTH (64 aa). Polar residues-rich tracts occupy residues 25–39 and 46–63; these read DMDS…TSLG and SLKT…GSKT. Positions 87 to 114 form a coiled coil; it reads TKDSITLAKEKEKKIEKRNEEIKLTFKA. The VWFA domain maps to 122 to 322; sequence DLLFIVDCTG…KMNERIFISI (201 aa). One can recognise an Alpha-type protein kinase domain in the interval 386 to 600; sequence TCLSSSYEMK…HCKKLGLTIP (215 aa). Position 570–576 (570–576) interacts with ATP; the sequence is GSCNLGK. The disordered stretch occupies residues 602 to 625; it reads FTSSSSTSSSSRSTSSSSSISYSY.

The protein belongs to the protein kinase superfamily. Alpha-type protein kinase family. ALPK subfamily. As to quaternary structure, interacts with calmodulin; in the presence of calcium. Post-translationally, autophosphorylated, in vitro.

Its subcellular location is the cytoplasm. It is found in the cytosol. The protein localises to the perinuclear region. The protein resides in the contractile vacuole membrane. The enzyme catalyses L-seryl-[protein] + ATP = O-phospho-L-seryl-[protein] + ADP + H(+). The catalysed reaction is L-threonyl-[protein] + ATP = O-phospho-L-threonyl-[protein] + ADP + H(+). Its activity is regulated as follows. Autophosphorylation activity enhanced by calcium/calmodulin. In terms of biological role, displays a modest preference for threonine over serine residues. Does not phosphorylate myosin II, however can phosphorylate MBP, in vitro. May be involved in the regulation of myosin II function during cytokinesis. Overexpression leads to impaired cell proliferation in suspension culture and fails to develop beyond the mound stage. Both overexpression and absence of the gene can result in defects in cytokinesis and alterations in myosin II abundance and assembly. The polypeptide is Alpha-protein kinase vwkA (vwkA) (Dictyostelium discoideum (Social amoeba)).